Here is a 157-residue protein sequence, read N- to C-terminus: Regenerating islet-derived protein 4 (157 aa).

A signal peptide spans methionine 1–serine 22. Cysteine 29 and cysteine 40 are disulfide-bonded. The C-type lectin domain maps to tyrosine 36–lysine 154. Residues asparagine 49 and asparagine 62 are each glycosylated (N-linked (GlcNAc...) asparagine). Disulfide bonds link cysteine 57/cysteine 153 and cysteine 128/cysteine 145. A carbohydrate contacts are provided by residues aspartate 97–glutamine 102 and lysine 134–lysine 136.

It localises to the secreted. Calcium-independent lectin displaying mannose-binding specificity and able to maintain carbohydrate recognition activity in an acidic environment. May be involved in inflammatory and metaplastic responses of the gastrointestinal epithelium. The sequence is that of Regenerating islet-derived protein 4 (Reg4) from Mus musculus (Mouse).